We begin with the raw amino-acid sequence, 228 residues long: Probable transcriptional regulatory protein SilR (228 aa).

The 115-residue stretch at 2–116 (KILIVEDDIK…ELLARVRTLL (115 aa)) folds into the Response regulatory domain. Aspartate 51 is subject to 4-aspartylphosphate. Residues 125–225 (ESQLKVADLS…VRGVGYMLEI (101 aa)) constitute a DNA-binding region (ompR/PhoB-type).

In terms of processing, phosphorylated by SilS.

The protein resides in the cytoplasm. Its function is as follows. Component of the sil cation-efflux system that confers resistance to silver. Probable member of a two-component regulatory system SilS/SilR. The sequence is that of Probable transcriptional regulatory protein SilR (silR) from Salmonella typhimurium.